Here is a 207-residue protein sequence, read N- to C-terminus: Small ribosomal subunit protein uS4 (207 aa).

The interval 31 to 55 (KCKLDSKPGQHGRTSGARTSDYGTQ) is disordered. Residues 42-53 (GRTSGARTSDYG) show a composition bias toward polar residues. Positions 97 to 160 (SRLDNVVYRM…KKQARIVEAL (64 aa)) constitute an S4 RNA-binding domain.

This sequence belongs to the universal ribosomal protein uS4 family. In terms of assembly, part of the 30S ribosomal subunit. Contacts protein S5. The interaction surface between S4 and S5 is involved in control of translational fidelity.

In terms of biological role, one of the primary rRNA binding proteins, it binds directly to 16S rRNA where it nucleates assembly of the body of the 30S subunit. With S5 and S12 plays an important role in translational accuracy. The polypeptide is Small ribosomal subunit protein uS4 (Burkholderia ambifaria (strain MC40-6)).